Reading from the N-terminus, the 104-residue chain is Large ribosomal subunit protein uL23 (104 aa).

The protein belongs to the universal ribosomal protein uL23 family. As to quaternary structure, part of the 50S ribosomal subunit. Contacts protein L29, and trigger factor when it is bound to the ribosome.

Functionally, one of the early assembly proteins it binds 23S rRNA. One of the proteins that surrounds the polypeptide exit tunnel on the outside of the ribosome. Forms the main docking site for trigger factor binding to the ribosome. The protein is Large ribosomal subunit protein uL23 of Polynucleobacter necessarius subsp. necessarius (strain STIR1).